A 243-amino-acid polypeptide reads, in one-letter code: tRNA (guanine-N(1)-)-methyltransferase (243 aa).

S-adenosyl-L-methionine contacts are provided by residues Gly123 and 143 to 148 (LGDFVM).

The protein belongs to the RNA methyltransferase TrmD family. In terms of assembly, homodimer.

The protein localises to the cytoplasm. The enzyme catalyses guanosine(37) in tRNA + S-adenosyl-L-methionine = N(1)-methylguanosine(37) in tRNA + S-adenosyl-L-homocysteine + H(+). Specifically methylates guanosine-37 in various tRNAs. This Ruegeria pomeroyi (strain ATCC 700808 / DSM 15171 / DSS-3) (Silicibacter pomeroyi) protein is tRNA (guanine-N(1)-)-methyltransferase.